A 471-amino-acid polypeptide reads, in one-letter code: Plasmepsin VII (471 aa).

The N-terminal stretch at 1 to 24 (MKSVYHHFAIIFFLKLFLCNCILS) is a signal peptide. Residues 96–438 (YYGKIAIGEN…DKDNLQIGFV (343 aa)) form the Peptidase A1 domain. Catalysis depends on residues aspartate 115 and aspartate 325.

Belongs to the peptidase A1 family.

It is found in the cytoplasm. This chain is Plasmepsin VII, found in Plasmodium berghei (strain Anka).